Here is a 927-residue protein sequence, read N- to C-terminus: SPX and EXS domain-containing protein 5 (927 aa).

In terms of domain architecture, SPX spans 1-460 (MKFGKYLESQ…GLSIGSQVMS (460 aa)). Disordered stretches follow at residues 54-78 (KINS…SSSN), 204-239 (KKNK…QHLQ), 257-305 (PIKS…DQDP), and 326-355 (SDNC…GGNN). Low complexity-rich tracts occupy residues 60 to 78 (PSPT…SSSN) and 208 to 224 (LNNN…NNNN). A compositionally biased stretch (polar residues) spans 257-270 (PIKSTPLSPKQQDG). The segment covering 286 to 299 (LEEEEEEEEEEDDN) has biased composition (acidic residues). Transmembrane regions (helical) follow at residues 516 to 536 (FFSG…YYFI), 553 to 573 (VYSA…DCWV), 597 to 617 (IFQA…VYMW), 636 to 656 (PLVL…IFQL), 682 to 702 (FFMG…AQFV), 769 to 789 (LSIV…DSGW), 845 to 862 (FVYY…TTWT), and 869 to 889 (QLTN…IEIL). Positions 717–927 (GCIRYARYFN…LPYQIRDNEN (211 aa)) constitute an EXS domain.

Belongs to the SYG1 (TC 2.A.94) family.

Its subcellular location is the membrane. In Dictyostelium discoideum (Social amoeba), this protein is SPX and EXS domain-containing protein 5.